Consider the following 138-residue polypeptide: MRTLWIMAVLLLGVEGSVIELGKMVFQETGKNPVKNYGLYGCNCGVGKRGKPVDATDSCCFVHRCCYKKVTGCDPKKDRYSYSWENKAIVCGEKNPPCLKQVCECDKAVAICLRENLGTYDKKHRVTMKFLCKAPESC.

The signal sequence occupies residues 1 to 16; sequence MRTLWIMAVLLLGVEG. Cystine bridges form between cysteine 42-cysteine 132, cysteine 44-cysteine 60, cysteine 59-cysteine 112, cysteine 65-cysteine 138, cysteine 66-cysteine 105, cysteine 73-cysteine 98, and cysteine 91-cysteine 103. Residues 122–133 form an important for membrane-damaging activities in eukaryotes and bacteria; heparin-binding region; it reads KKHRVTMKFLCK.

The protein belongs to the phospholipase A2 family. Group II subfamily. R49 sub-subfamily. As to quaternary structure, homodimer; non-covalently linked. In terms of tissue distribution, expressed by the venom gland.

It localises to the secreted. In terms of biological role, snake venom phospholipase A2 homolog that lacks enzymatic activity. Exhibits potent myotoxicity causing myonecrosis and edema in the gastrocnemius muscle of mice. Is also able to stimulate the release of IL12 (IL12A-IL12B), TNF-alpha (TNF), IL6 and IL1-beta (IL1B) from human monocytes, and induce IL2, TNFalpha and IL6 release from T-cells. A model of myotoxic mechanism has been proposed: an apo Lys49-PLA2 is activated by the entrance of a hydrophobic molecule (e.g. fatty acid) at the hydrophobic channel of the protein leading to a reorientation of a monomer. This reorientation causes a transition between 'inactive' to 'active' states, causing alignment of C-terminal and membrane-docking sites (MDoS) side-by-side and putting the membrane-disruption sites (MDiS) in the same plane, exposed to solvent and in a symmetric position for both monomers. The MDoS region stabilizes the toxin on membrane by the interaction of charged residues with phospholipid head groups. Subsequently, the MDiS region destabilizes the membrane with penetration of hydrophobic residues. This insertion causes a disorganization of the membrane, allowing an uncontrolled influx of ions (i.e. calcium and sodium), and eventually triggering irreversible intracellular alterations and cell death. The chain is Basic phospholipase A2 homolog promutoxin from Protobothrops mucrosquamatus (Taiwan habu).